The primary structure comprises 218 residues: Ras-related protein Rab-27B (218 aa).

Thr-2 bears the N-acetylthreonine mark. 16 to 24 contacts GTP; it reads GDSGVGKTT. The Effector region signature appears at 38-46; sequence FITTVGIDF. GTP is bound by residues 74-78, 133-136, and 163-165; these read DTAGQ, NKAD, and SAA. A disulfide bridge connects residues Cys-123 and Cys-188. Positions 193 to 218 are disordered; it reads HIPDTVNGSSSGKLDGEKSAEKKCAC. The span at 206 to 218 shows a compositional bias: basic and acidic residues; that stretch reads LDGEKSAEKKCAC. Residues Cys-216 and Cys-218 are each lipidated (S-geranylgeranyl cysteine). Cys-218 carries the cysteine methyl ester modification.

This sequence belongs to the small GTPase superfamily. Rab family. As to quaternary structure, interacts with SYTL2, SYTL4, MYRIP and MLPH. Interacts with RPH3A and RPH3A. Interacts (GDP-bound form preferentially) with DENND10. Expressed at an extraordinary high level (0.1% of total protein) in urothelium.

It localises to the membrane. Its subcellular location is the late endosome. The catalysed reaction is GTP + H2O = GDP + phosphate + H(+). With respect to regulation, regulated by guanine nucleotide exchange factors (GEFs) which promote the exchange of bound GDP for free GTP, GTPase activating proteins (GAPs) which increase the GTP hydrolysis activity, and GDP dissociation inhibitors which inhibit the dissociation of the nucleotide from the GTPase. Activated by GEFs such as DENND10. Functionally, small GTPase which cycles between active GTP-bound and inactive GDP-bound states. In its active state, binds to a variety of effector proteins to regulate homeostasis of late endocytic pathway, including endosomal positioning, maturation and secretion. Plays a role in NTRK2/TRKB axonal anterograde transport by facilitating the association of NTRK2/TRKB with KLC1. May be involved in targeting uroplakins to urothelial apical membranes. In Bos taurus (Bovine), this protein is Ras-related protein Rab-27B (RAB27B).